A 476-amino-acid chain; its full sequence is Cysteine--tRNA ligase (476 aa).

C36 lines the Zn(2+) pocket. Residues 38–48 (PTVYDYAHIGN) carry the 'HIGH' region motif. 3 residues coordinate Zn(2+): C221, H246, and E250. The 'KMSKS' region signature appears at 278–282 (KMSKS). K281 contacts ATP.

It belongs to the class-I aminoacyl-tRNA synthetase family. Monomer. Zn(2+) serves as cofactor.

It is found in the cytoplasm. It carries out the reaction tRNA(Cys) + L-cysteine + ATP = L-cysteinyl-tRNA(Cys) + AMP + diphosphate. This Chlamydia caviae (strain ATCC VR-813 / DSM 19441 / 03DC25 / GPIC) (Chlamydophila caviae) protein is Cysteine--tRNA ligase.